The primary structure comprises 464 residues: Glutamate--tRNA ligase (464 aa).

The 'HIGH' region signature appears at 8 to 18 (PSPTGYMHLGN). 4 residues coordinate Zn(2+): C96, C98, C123, and H125. A 'KMSKS' region motif is present at residues 240 to 244 (KLSKR). K243 contacts ATP.

Belongs to the class-I aminoacyl-tRNA synthetase family. Glutamate--tRNA ligase type 1 subfamily. In terms of assembly, monomer. Requires Zn(2+) as cofactor.

The protein localises to the cytoplasm. The catalysed reaction is tRNA(Glu) + L-glutamate + ATP = L-glutamyl-tRNA(Glu) + AMP + diphosphate. Functionally, catalyzes the attachment of glutamate to tRNA(Glu) in a two-step reaction: glutamate is first activated by ATP to form Glu-AMP and then transferred to the acceptor end of tRNA(Glu). The sequence is that of Glutamate--tRNA ligase from Hydrogenobaculum sp. (strain Y04AAS1).